The chain runs to 258 residues: NH(3)-dependent NAD(+) synthetase (258 aa).

34–41 (GLSGGIDS) contributes to the ATP binding site. Aspartate 40 is a binding site for Mg(2+). Residue arginine 116 coordinates deamido-NAD(+). Residue threonine 136 participates in ATP binding. Glutamate 141 is a Mg(2+) binding site. The ATP site is built by lysine 165 and serine 187.

Belongs to the NAD synthetase family. As to quaternary structure, homodimer.

It catalyses the reaction deamido-NAD(+) + NH4(+) + ATP = AMP + diphosphate + NAD(+) + H(+). Its pathway is cofactor biosynthesis; NAD(+) biosynthesis; NAD(+) from deamido-NAD(+) (ammonia route): step 1/1. In terms of biological role, catalyzes the ATP-dependent amidation of deamido-NAD to form NAD. Uses ammonia as a nitrogen source. The polypeptide is NH(3)-dependent NAD(+) synthetase (Fusobacterium nucleatum subsp. nucleatum (strain ATCC 25586 / DSM 15643 / BCRC 10681 / CIP 101130 / JCM 8532 / KCTC 2640 / LMG 13131 / VPI 4355)).